We begin with the raw amino-acid sequence, 352 residues long: UPF0252 protein MJ1282 (352 aa).

Belongs to the UPF0252 family.

The polypeptide is UPF0252 protein MJ1282 (Methanocaldococcus jannaschii (strain ATCC 43067 / DSM 2661 / JAL-1 / JCM 10045 / NBRC 100440) (Methanococcus jannaschii)).